The chain runs to 663 residues: Probable potassium transport system protein Kup (663 aa).

Residues Met1–Ala23 form a disordered region. Helical transmembrane passes span Pro81 to Phe101, Leu137 to Pro157, Pro173 to Ile193, Val201 to Val221, Ile224 to Ala244, Trp248 to Tyr268, Trp283 to Leu303, Leu315 to Val335, Ile373 to Phe393, Leu399 to His419, Ala433 to Val453, and Val455 to Thr475.

This sequence belongs to the HAK/KUP transporter (TC 2.A.72) family.

It localises to the cell inner membrane. The catalysed reaction is K(+)(in) + H(+)(in) = K(+)(out) + H(+)(out). Functionally, transport of potassium into the cell. Likely operates as a K(+):H(+) symporter. This chain is Probable potassium transport system protein Kup, found in Anaeromyxobacter sp. (strain Fw109-5).